The primary structure comprises 422 residues: Probable isoprenylcysteine alpha-carbonyl methylesterase ICMEL2 (422 aa).

Positions 1-16 (MQLSPERCRPMSENRE) are enriched in basic and acidic residues. Positions 1–55 (MQLSPERCRPMSENREAWSANSEEMELLHGSNRLSSPEHVRRRVSGNSSEDGSPR) are disordered. A run of 2 helical transmembrane segments spans residues 97 to 117 (LLAL…VAYL) and 152 to 172 (VVVF…GSLL). Substrate-binding positions include 158–160 (GGA) and 229–231 (QSA). Residues Ser-230, Asp-331, and His-363 contribute to the active site.

It belongs to the AB hydrolase superfamily. Isoprenylcysteine methylesterase family. In terms of tissue distribution, expressed at low levels in flowers and siliques.

The protein resides in the endoplasmic reticulum membrane. Its subcellular location is the golgi apparatus membrane. The catalysed reaction is [protein]-C-terminal S-[(2E,6E)-farnesyl]-L-cysteine methyl ester + H2O = [protein]-C-terminal S-[(2E,6E)-farnesyl]-L-cysteine + methanol + H(+). In terms of biological role, catalyzes the demethylation of isoprenylcysteine methylesters. May act as a negative regulator of ABA signaling. The sequence is that of Probable isoprenylcysteine alpha-carbonyl methylesterase ICMEL2 from Arabidopsis thaliana (Mouse-ear cress).